Consider the following 856-residue polypeptide: Leucine--tRNA ligase (856 aa).

The short motif at 42 to 52 (PYPSGKLHMGH) is the 'HIGH' region element. Positions 615–619 (KMSKS) match the 'KMSKS' region motif. K618 contributes to the ATP binding site.

This sequence belongs to the class-I aminoacyl-tRNA synthetase family.

It is found in the cytoplasm. It catalyses the reaction tRNA(Leu) + L-leucine + ATP = L-leucyl-tRNA(Leu) + AMP + diphosphate. The protein is Leucine--tRNA ligase of Chromohalobacter salexigens (strain ATCC BAA-138 / DSM 3043 / CIP 106854 / NCIMB 13768 / 1H11).